A 428-amino-acid polypeptide reads, in one-letter code: 3-phosphoshikimate 1-carboxyvinyltransferase (428 aa).

Residues Lys-21, Ser-22, and Arg-26 each contribute to the 3-phosphoshikimate site. A phosphoenolpyruvate-binding site is contributed by Lys-21. The phosphoenolpyruvate site is built by Gly-91 and Arg-119. Positions 164, 166, 313, and 340 each coordinate 3-phosphoshikimate. Gln-166 is a binding site for phosphoenolpyruvate. Asp-313 acts as the Proton acceptor in catalysis. Phosphoenolpyruvate is bound by residues Arg-344 and Arg-386.

The protein belongs to the EPSP synthase family. As to quaternary structure, monomer.

The protein resides in the cytoplasm. The enzyme catalyses 3-phosphoshikimate + phosphoenolpyruvate = 5-O-(1-carboxyvinyl)-3-phosphoshikimate + phosphate. Its pathway is metabolic intermediate biosynthesis; chorismate biosynthesis; chorismate from D-erythrose 4-phosphate and phosphoenolpyruvate: step 6/7. Functionally, catalyzes the transfer of the enolpyruvyl moiety of phosphoenolpyruvate (PEP) to the 5-hydroxyl of shikimate-3-phosphate (S3P) to produce enolpyruvyl shikimate-3-phosphate and inorganic phosphate. The protein is 3-phosphoshikimate 1-carboxyvinyltransferase of Campylobacter jejuni subsp. doylei (strain ATCC BAA-1458 / RM4099 / 269.97).